Consider the following 58-residue polypeptide: uncharacterized protein (58 aa).

Residues 12–32 (VALVYISVYFFSCISLIVYFF) form a helical membrane-spanning segment.

The protein resides in the membrane. This is an uncharacterized protein from Saccharomyces cerevisiae (strain ATCC 204508 / S288c) (Baker's yeast).